The sequence spans 100 residues: Small ribosomal subunit protein uS14c (100 aa).

The segment covering 1–10 has biased composition (basic and acidic residues); the sequence is MARKGLIERE. Positions 1-29 are disordered; it reads MARKGLIEREKKRKKLEQKYHSIRGSSKK.

This sequence belongs to the universal ribosomal protein uS14 family. As to quaternary structure, part of the 30S ribosomal subunit.

It is found in the plastid. The protein localises to the chloroplast. Binds 16S rRNA, required for the assembly of 30S particles. The chain is Small ribosomal subunit protein uS14c from Acorus calamus (Sweet flag).